A 489-amino-acid chain; its full sequence is DNA-dependent metalloprotease SPRTN (489 aa).

M1 is modified (N-acetylmethionine). One can recognise a SprT-like domain in the interval 45–212 (LQALFVQFND…KTCGGTYIKI (168 aa)). H111 contributes to the Zn(2+) binding site. The active site involves E112. The Zn(2+) site is built by H115 and H130. K230 is subject to N6-acetyllysine. The SHP-box motif lies at 253–261 (FSGKGYVLG). The residue at position 268 (S268) is a Phosphoserine. K303 participates in a covalent cross-link: Glycyl lysine isopeptide (Lys-Gly) (interchain with G-Cter in SUMO2). The PIP-box signature appears at 325–332 (QNVLSNYF). K341 is covalently cross-linked (Glycyl lysine isopeptide (Lys-Gly) (interchain with G-Cter in SUMO2); alternate). A Glycyl lysine isopeptide (Lys-Gly) (interchain with G-Cter in ubiquitin); alternate cross-link involves residue K341. The interval 357–409 (GNIPKNSVSSSSQRRVSSSKISLRNSSKVTESASVMPSQDVSGSEDTFPNKRP) is disordered. K361 participates in a covalent cross-link: Glycyl lysine isopeptide (Lys-Gly) (interchain with G-Cter in SUMO2). Low complexity predominate over residues 363-383 (SVSSSSQRRVSSSKISLRNSS). 2 positions are modified to phosphoserine; by CHEK1: S373 and S374. Residue K376 forms a Glycyl lysine isopeptide (Lys-Gly) (interchain with G-Cter in SUMO2); alternate linkage. A Glycyl lysine isopeptide (Lys-Gly) (interchain with G-Cter in ubiquitin); alternate cross-link involves residue K376. Residue S383 is modified to Phosphoserine; by CHEK1. Polar residues predominate over residues 384–403 (KVTESASVMPSQDVSGSEDT). The Nuclear localization signal motif lies at 402–413 (DTFPNKRPRLED). K414 is covalently cross-linked (Glycyl lysine isopeptide (Lys-Gly) (interchain with G-Cter in ubiquitin)). Residues K423 and K424 each participate in a glycyl lysine isopeptide (Lys-Gly) (interchain with G-Cter in SUMO2) cross-link. Residues 428–453 (KSSGNDPKYSTTTAQNSSSSSSQSKM) form a disordered region. A Glycyl lysine isopeptide (Lys-Gly) (interchain with G-Cter in ubiquitin) cross-link involves residue K435. The span at 437 to 451 (STTTAQNSSSSSSQS) shows a compositional bias: low complexity. The segment at 453-480 (MVNCPVCQNEVLESQINEHLDWCLEGDS) adopts a UBZ4-type zinc-finger fold. Positions 456, 459, 471, and 475 each coordinate Zn(2+). A Glycyl lysine isopeptide (Lys-Gly) (interchain with G-Cter in SUMO2) cross-link involves residue K484.

The protein belongs to the Spartan family. In terms of assembly, homodimer. Interacts (VIA PIP-box) with PCNA (when ubiquitinated). Interacts (via its SHP-box) with VCP/p97. Interacts with RAD18. Interacts with KCTD13 and POLD3. The cofactor is Zn(2+). Post-translationally, autocatalytically cleaved in response to double-stranded DNA-binding: autocatalytic cleavage takes place in trans and leads to inactivation. In terms of processing, monoubiquitinated; monoubiquitination promotes exclusion from chromatin. Deubiquitinated by VCPIP1: deubiquitination is required for subsequent acetylation and recruitment to chromatin and DNA damage sites. Acetylated following deubiquitination by VCPIP1, leading to recruitment to chromatin and DNA damage sites. Post-translationally, phosphorylation by CHEK1 promotes recruitment to chromatin.

It is found in the nucleus. It localises to the chromosome. DNA-binding activates the protease activity: single-stranded DNA-binding specifically activates ability to cleave covalent DNA-protein cross-links (DPCs). In contrast, double-stranded DNA-binding specifically activates autocatalytic cleavage, and subsequent inactivation. DNA-dependent metalloendopeptidase that mediates the proteolytic cleavage of covalent DNA-protein cross-links (DPCs) during DNA synthesis, thereby playing a key role in maintaining genomic integrity. DPCs are highly toxic DNA lesions that interfere with essential chromatin transactions, such as replication and transcription, and which are induced by reactive agents, such as UV light or formaldehyde. Associates with the DNA replication machinery and specifically removes DPCs during DNA synthesis. Catalyzes proteolytic cleavage of the HMCES DNA-protein cross-link following unfolding by the BRIP1/FANCJ helicase. Acts as a pleiotropic protease for DNA-binding proteins cross-linked with DNA, such as TOP1, TOP2A, histones H3 and H4. Mediates degradation of DPCs that are not ubiquitinated, while it is not able to degrade ubiquitinated DPCs. SPRTN activation requires polymerase collision with DPCs followed by helicase bypass of DPCs. Involved in recruitment of VCP/p97 to sites of DNA damage. Also acts as an activator of CHEK1 during normal DNA replication by mediating proteolytic cleavage of CHEK1, thereby promoting CHEK1 removal from chromatin and subsequent activation. Does not activate CHEK1 in response to DNA damage. May also act as a 'reader' of ubiquitinated PCNA: recruited to sites of UV damage and interacts with ubiquitinated PCNA and RAD18, the E3 ubiquitin ligase that monoubiquitinates PCNA. Facilitates chromatin association of RAD18 and is required for efficient PCNA monoubiquitination, promoting a feed-forward loop to enhance PCNA ubiquitination and translesion DNA synthesis. The polypeptide is DNA-dependent metalloprotease SPRTN (Homo sapiens (Human)).